We begin with the raw amino-acid sequence, 471 residues long: Threonine--tRNA ligase catalytic subunit (471 aa).

Positions 8–333 (THIDYAYELD…YLEHRRGRMP (326 aa)) are catalytic. Residues Cys-112, His-166, and His-310 each coordinate Zn(2+).

Belongs to the class-II aminoacyl-tRNA synthetase family. In terms of assembly, homodimer. Probably interacts with its editing subunit. It depends on Zn(2+) as a cofactor.

It is found in the cytoplasm. It catalyses the reaction tRNA(Thr) + L-threonine + ATP = L-threonyl-tRNA(Thr) + AMP + diphosphate + H(+). In terms of biological role, catalyzes the attachment of threonine to tRNA(Thr) in a two-step reaction: L-threonine is first activated by ATP to form Thr-AMP and then transferred to the acceptor end of tRNA(Thr). This protein is probably not able to deacylate mischarged L-seryl-tRNA(Thr) as it lacks the appropriate domain. The sequence is that of Threonine--tRNA ligase catalytic subunit from Aeropyrum pernix (strain ATCC 700893 / DSM 11879 / JCM 9820 / NBRC 100138 / K1).